We begin with the raw amino-acid sequence, 83 residues long: MKTLLLTLVVVTIVCLDLGYTMTCYNQQSSQAKTTTTCSGGVSSCYRKTWSDIRGTIIERGCGCPSVKKGIERICCGTDKCNN.

The signal sequence occupies residues 1–21 (MKTLLLTLVVVTIVCLDLGYT). 4 disulfide bridges follow: Cys24–Cys45, Cys38–Cys62, Cys64–Cys75, and Cys76–Cys81.

Belongs to the three-finger toxin family. Short-chain subfamily. Type I alpha-neurotoxin sub-subfamily. In terms of tissue distribution, expressed by the venom gland.

The protein resides in the secreted. Functionally, binds to muscle nicotinic acetylcholine receptor (nAChR) and inhibit acetylcholine from binding to the receptor, thereby impairing neuromuscular transmission. The chain is Short neurotoxin 3FTx-Oxy3 from Oxyuranus microlepidotus (Inland taipan).